A 494-amino-acid chain; its full sequence is Integrin beta-like protein 1 (494 aa).

Residues 1 to 23 (MHPPGFKNFLLLVSSLFFIGLSA) form the signal peptide. Intrachain disulfides connect Cys40–Cys71, Cys51–Cys69, Cys63–Cys74, Cys76–Cys89, Cys91–Cys112, Cys96–Cys110, Cys104–Cys115, Cys117–Cys126, Cys132–Cys159, Cys143–Cys157, Cys151–Cys162, Cys164–Cys178, Cys180–Cys202, Cys185–Cys200, Cys194–Cys205, Cys207–Cys216, Cys220–Cys247, Cys231–Cys245, Cys239–Cys250, Cys252–Cys269, Cys271–Cys296, Cys276–Cys294, Cys288–Cys299, Cys301–Cys310, Cys316–Cys343, Cys327–Cys341, Cys335–Cys346, Cys348–Cys361, Cys363–Cys384, Cys368–Cys382, Cys376–Cys387, Cys389–Cys398, Cys404–Cys431, Cys415–Cys429, Cys423–Cys434, Cys436–Cys448, Cys450–Cys471, Cys455–Cys469, Cys463–Cys474, and Cys476–Cys485. I-EGF domains lie at 40–90 (CRLS…PLCE), 91–127 (CHDW…EACQ), 132–179 (CDLT…KFCE), 180–217 (CDDR…DKCE), 220–270 (CDIT…DTCE), 271–311 (CDER…KKCE), 316–362 (CPLS…KTCE), 363–399 (CDDR…KLCQ), 404–449 (CNMT…EFCD), and 450–486 (CDDR…NACE). The stretch at 51-95 (CRAPGQPPGSALCHDRGRCECGVCICHVTEPGTYFGPLCECHDWV) is one I repeat. Positions 51–494 (CRAPGQPPGS…CEIWLGTEYP (444 aa)) are cysteine-rich tandem repeats. One copy of the II repeat lies at 96–142 (CETYDGKTCAGHGTCDCGKCKCDVGWSGEACQYPTKCDLTKKISNQM). The stretch at 143–184 (CKNSQDVICSNAGTCHCGRCKCDNSDGHGLIYGKFCECDDRE) is one III repeat. The stretch at 185 to 230 (CIDDETEEICGGHGKCYCGNCYCEAGWHGDKCEFQCDITPWESKRR) is one IV repeat. A V repeat occupies 231–275 (CTSPDGKVCSNRGTCVCGECSCHDVDPTGDWGDIHGDTCECDERD). Residues 276–326 (CRAVYDRYSDDFCSGHGQCNCGRCDCRAGWYGKKCEHPKNCPLSAEESTRK) form a VI repeat. A VII repeat occupies 327–367 (CQGSSDLPCSGRGRCECGRCTCYPPGDSRVYGKTCECDDRR). Residues 368–414 (CEDLDGVVCGGRGTCSCGRCVCEKGWFGKLCQHPRKCNMTEEQSRSL) form a VIII repeat. The N-linked (GlcNAc...) asparagine glycan is linked to Asn405. One copy of the IX repeat lies at 415 to 454 (CESADGTLCSGKGSCHCGKCICSGEEWYISGEFCDCDDRD). A X repeat occupies 455–494 (CDKHDGLICTGNGICSCGNCECWDGWNGNACEIWLGTEYP).

The protein resides in the secreted. In Rattus norvegicus (Rat), this protein is Integrin beta-like protein 1 (Itgbl1).